The primary structure comprises 439 residues: tRNA-2-methylthio-N(6)-dimethylallyladenosine synthase (439 aa).

The MTTase N-terminal domain maps to 5-121 (KKLFIKTYGC…LPELEAKTRA (117 aa)). [4Fe-4S] cluster-binding residues include Cys-14, Cys-50, Cys-84, Cys-159, Cys-163, and Cys-166. Residues 145–378 (AKRGPTAFLT…ITRHQREIQD (234 aa)) form the Radical SAM core domain. A TRAM domain is found at 378–439 (DGMVGREVSV…GANSLAGELA (62 aa)).

Belongs to the methylthiotransferase family. MiaB subfamily. Monomer. [4Fe-4S] cluster serves as cofactor.

Its subcellular location is the cytoplasm. It catalyses the reaction N(6)-dimethylallyladenosine(37) in tRNA + (sulfur carrier)-SH + AH2 + 2 S-adenosyl-L-methionine = 2-methylsulfanyl-N(6)-dimethylallyladenosine(37) in tRNA + (sulfur carrier)-H + 5'-deoxyadenosine + L-methionine + A + S-adenosyl-L-homocysteine + 2 H(+). Its function is as follows. Catalyzes the methylthiolation of N6-(dimethylallyl)adenosine (i(6)A), leading to the formation of 2-methylthio-N6-(dimethylallyl)adenosine (ms(2)i(6)A) at position 37 in tRNAs that read codons beginning with uridine. The chain is tRNA-2-methylthio-N(6)-dimethylallyladenosine synthase from Ruegeria pomeroyi (strain ATCC 700808 / DSM 15171 / DSS-3) (Silicibacter pomeroyi).